The following is a 394-amino-acid chain: Elongation factor Tu (394 aa).

Residues 10-204 enclose the tr-type G domain; sequence KPHVNVGTIG…ALDTYIPEPE (195 aa). Positions 19 to 26 are G1; it reads GHVDHGKT. 19-26 contributes to the GTP binding site; sequence GHVDHGKT. Mg(2+) is bound at residue threonine 26. The G2 stretch occupies residues 60 to 64; it reads GITIN. The interval 81 to 84 is G3; that stretch reads DCPG. GTP-binding positions include 81 to 85 and 136 to 139; these read DCPGH and NKCD. The G4 stretch occupies residues 136–139; the sequence is NKCD. The tract at residues 174-176 is G5; sequence SAL.

This sequence belongs to the TRAFAC class translation factor GTPase superfamily. Classic translation factor GTPase family. EF-Tu/EF-1A subfamily. In terms of assembly, monomer.

The protein localises to the cytoplasm. The enzyme catalyses GTP + H2O = GDP + phosphate + H(+). Its function is as follows. GTP hydrolase that promotes the GTP-dependent binding of aminoacyl-tRNA to the A-site of ribosomes during protein biosynthesis. In Shewanella sediminis (strain HAW-EB3), this protein is Elongation factor Tu.